We begin with the raw amino-acid sequence, 285 residues long: Anamorsin homolog 1 (285 aa).

The interval 1–150 (MEATVLLVTD…QKPTWETGSS (150 aa)) is N-terminal SAM-like domain. The segment at 150 to 195 (SFSLKKKSVQKQESLPKPGALSVKPEMNVDLEDLIDEESLLSEEDL) is linker. 4 residues coordinate [2Fe-2S] cluster: Cys206, Cys215, Cys218, and Cys220. The interval 206-220 (CEVSTKRKACKNCTC) is fe-S binding site A. [4Fe-4S] cluster is bound by residues Cys246, Cys249, Cys257, and Cys260. Short sequence motifs (cx2C motif) lie at residues 246–249 (CGNC) and 257–260 (CSSC). Residues 246–260 (CGNCGLGDAFRCSSC) form a fe-S binding site B region.

This sequence belongs to the anamorsin family. Monomer. [2Fe-2S] cluster is required as a cofactor. It depends on [4Fe-4S] cluster as a cofactor.

The protein resides in the cytoplasm. It is found in the mitochondrion intermembrane space. Its function is as follows. Component of the cytosolic iron-sulfur (Fe-S) protein assembly (CIA) machinery. Required for the maturation of extramitochondrial Fe-S proteins. Part of an electron transfer chain functioning in an early step of cytosolic Fe-S biogenesis, facilitating the de novo assembly of a [4Fe-4S] cluster on the cytosolic Fe-S scaffold complex. Electrons are transferred from NADPH via a FAD- and FMN-containing diflavin oxidoreductase. Together with the diflavin oxidoreductase, also required for the assembly of the diferric tyrosyl radical cofactor of ribonucleotide reductase (RNR), probably by providing electrons for reduction during radical cofactor maturation in the catalytic small subunit. In Picea sitchensis (Sitka spruce), this protein is Anamorsin homolog 1.